The chain runs to 153 residues: LOB domain-containing protein 26 (153 aa).

Positions 4–105 (NPCEVCRFQN…EEVSKTKKLL (102 aa)) constitute an LOB domain. Residues 126-153 (KSKPSVLRKRKRKTKSSDESAIRVVEDS) form a disordered region. The segment covering 140-153 (KSSDESAIRVVEDS) has biased composition (basic and acidic residues).

The protein belongs to the LOB domain-containing protein family.

This chain is LOB domain-containing protein 26 (LBD26), found in Arabidopsis thaliana (Mouse-ear cress).